A 301-amino-acid chain; its full sequence is tRNA-cytidine(32) 2-sulfurtransferase (301 aa).

The short motif at 55-60 (SGGKDS) is the PP-loop motif element. The [4Fe-4S] cluster site is built by Cys-130, Cys-133, and Cys-221.

Belongs to the TtcA family. Homodimer. It depends on Mg(2+) as a cofactor. The cofactor is [4Fe-4S] cluster.

It localises to the cytoplasm. The catalysed reaction is cytidine(32) in tRNA + S-sulfanyl-L-cysteinyl-[cysteine desulfurase] + AH2 + ATP = 2-thiocytidine(32) in tRNA + L-cysteinyl-[cysteine desulfurase] + A + AMP + diphosphate + H(+). The protein operates within tRNA modification. Functionally, catalyzes the ATP-dependent 2-thiolation of cytidine in position 32 of tRNA, to form 2-thiocytidine (s(2)C32). The sulfur atoms are provided by the cysteine/cysteine desulfurase (IscS) system. This Acinetobacter baumannii (strain SDF) protein is tRNA-cytidine(32) 2-sulfurtransferase.